Consider the following 340-residue polypeptide: 4-hydroxy-3-methylbut-2-enyl diphosphate reductase (340 aa).

Residue Cys-13 participates in [4Fe-4S] cluster binding. The (2E)-4-hydroxy-3-methylbut-2-enyl diphosphate site is built by His-42 and His-75. Dimethylallyl diphosphate contacts are provided by His-42 and His-75. Isopentenyl diphosphate is bound by residues His-42 and His-75. Residue Cys-97 coordinates [4Fe-4S] cluster. His-125 is a binding site for (2E)-4-hydroxy-3-methylbut-2-enyl diphosphate. His-125 provides a ligand contact to dimethylallyl diphosphate. His-125 lines the isopentenyl diphosphate pocket. The active-site Proton donor is the Glu-127. A (2E)-4-hydroxy-3-methylbut-2-enyl diphosphate-binding site is contributed by Thr-165. Cys-195 contacts [4Fe-4S] cluster. (2E)-4-hydroxy-3-methylbut-2-enyl diphosphate is bound by residues Ser-223, Ser-224, Asn-225, and Ser-267. The dimethylallyl diphosphate site is built by Ser-223, Ser-224, Asn-225, and Ser-267. Isopentenyl diphosphate is bound by residues Ser-223, Ser-224, Asn-225, and Ser-267. The segment at 317–340 (NNLDNKTAASEEADSLSNDTEQEA) is disordered. The span at 331–340 (SLSNDTEQEA) shows a compositional bias: polar residues.

The protein belongs to the IspH family. The cofactor is [4Fe-4S] cluster.

The enzyme catalyses isopentenyl diphosphate + 2 oxidized [2Fe-2S]-[ferredoxin] + H2O = (2E)-4-hydroxy-3-methylbut-2-enyl diphosphate + 2 reduced [2Fe-2S]-[ferredoxin] + 2 H(+). The catalysed reaction is dimethylallyl diphosphate + 2 oxidized [2Fe-2S]-[ferredoxin] + H2O = (2E)-4-hydroxy-3-methylbut-2-enyl diphosphate + 2 reduced [2Fe-2S]-[ferredoxin] + 2 H(+). It functions in the pathway isoprenoid biosynthesis; dimethylallyl diphosphate biosynthesis; dimethylallyl diphosphate from (2E)-4-hydroxy-3-methylbutenyl diphosphate: step 1/1. The protein operates within isoprenoid biosynthesis; isopentenyl diphosphate biosynthesis via DXP pathway; isopentenyl diphosphate from 1-deoxy-D-xylulose 5-phosphate: step 6/6. Its function is as follows. Catalyzes the conversion of 1-hydroxy-2-methyl-2-(E)-butenyl 4-diphosphate (HMBPP) into a mixture of isopentenyl diphosphate (IPP) and dimethylallyl diphosphate (DMAPP). Acts in the terminal step of the DOXP/MEP pathway for isoprenoid precursor biosynthesis. This chain is 4-hydroxy-3-methylbut-2-enyl diphosphate reductase, found in Zymomonas mobilis subsp. mobilis (strain ATCC 31821 / ZM4 / CP4).